Reading from the N-terminus, the 153-residue chain is Small ribosomal subunit protein uS5 (153 aa).

Residues 15 to 78 (FQEVVVNVGR…DDAFKNLIHV (64 aa)) enclose the S5 DRBM domain.

It belongs to the universal ribosomal protein uS5 family. Part of the 30S ribosomal subunit. Contacts proteins S4 and S8.

Functionally, with S4 and S12 plays an important role in translational accuracy. In terms of biological role, located at the back of the 30S subunit body where it stabilizes the conformation of the head with respect to the body. The chain is Small ribosomal subunit protein uS5 from Helicobacter acinonychis (strain Sheeba).